A 471-amino-acid chain; its full sequence is Putative multidrug resistance protein MdtD (471 aa).

Helical transmembrane passes span 12–32 (LWIV…VNTA), 49–69 (MVVV…GWLA), 77–97 (IFFT…WSST), 102–124 (VLAR…LTVM), 138–158 (FVTL…GILV), 165–185 (WIFL…LMLM), 197–217 (LSGF…LDGS), 222–242 (LSPL…ALYL), 263–283 (FSLG…LPFM), 286–306 (VFLQ…MIPM), 342–362 (LLFM…VLFL), 396–416 (MIMQ…LGMF), and 431–451 (VFMY…LIFA).

It belongs to the major facilitator superfamily. TCR/Tet family.

The protein resides in the cell inner membrane. This is Putative multidrug resistance protein MdtD from Citrobacter koseri (strain ATCC BAA-895 / CDC 4225-83 / SGSC4696).